Consider the following 281-residue polypeptide: Stomatin-4 (281 aa).

Residues 28 to 48 (WIITIISYLVVLFTLPLSAFF) traverse the membrane as a helical segment.

This sequence belongs to the band 7/mec-2 family.

The protein resides in the membrane. The polypeptide is Stomatin-4 (sto-4) (Caenorhabditis elegans).